The sequence spans 103 residues: Large ribosomal subunit protein bL21 (103 aa).

It belongs to the bacterial ribosomal protein bL21 family. Part of the 50S ribosomal subunit. Contacts protein L20.

This protein binds to 23S rRNA in the presence of protein L20. The protein is Large ribosomal subunit protein bL21 of Bordetella parapertussis (strain 12822 / ATCC BAA-587 / NCTC 13253).